The sequence spans 21 residues: Alpha-fibrinogenase A1 (21 aa).

The protein belongs to the peptidase S1 family. Snake venom subfamily. Monomer. As to expression, expressed by the venom gland.

Its subcellular location is the secreted. With respect to regulation, inhibited by PMSF, bovine aprotinin (APR), and soybean trypsin inhibitor (STI). Is not inhibited by EDTA, beta-mercaptoethanol, and high temperature (85 degrees Celsius). Snake venom serine protease that completely cleaves fibrinogen Aalpha chain (FGA), partially cleaves Bbeta chain (FGB) and has no activity on gamma chain. Is more potent that A2 and A3 alpha-fibrinogenases. Very active within 5 minutes. The chain is Alpha-fibrinogenase A1 from Crotalus atrox (Western diamondback rattlesnake).